The chain runs to 225 residues: ATP-dependent dethiobiotin synthetase BioD (225 aa).

12–17 (EVGKTY) lines the ATP pocket. A Mg(2+)-binding site is contributed by threonine 16. The active site involves lysine 37. Serine 41 contacts substrate. ATP contacts are provided by residues aspartate 52, 114–117 (EGAG), and 174–175 (NC). Positions 52 and 114 each coordinate Mg(2+).

The protein belongs to the dethiobiotin synthetase family. As to quaternary structure, homodimer. Mg(2+) serves as cofactor.

Its subcellular location is the cytoplasm. It carries out the reaction (7R,8S)-7,8-diammoniononanoate + CO2 + ATP = (4R,5S)-dethiobiotin + ADP + phosphate + 3 H(+). It functions in the pathway cofactor biosynthesis; biotin biosynthesis; biotin from 7,8-diaminononanoate: step 1/2. Catalyzes a mechanistically unusual reaction, the ATP-dependent insertion of CO2 between the N7 and N8 nitrogen atoms of 7,8-diaminopelargonic acid (DAPA, also called 7,8-diammoniononanoate) to form a ureido ring. The sequence is that of ATP-dependent dethiobiotin synthetase BioD from Francisella tularensis subsp. novicida (strain U112).